Reading from the N-terminus, the 389-residue chain is Endo-chitosanase C (389 aa).

The signal sequence occupies residues 1–22 (MPIKSFASRLALSLAICGTAMG). Residues 280–313 (CSWPGHCAGFKNKGATCSSNDDCSDDLACQNGKC) form an R3-1 repeat. An R3-2 repeat occupies 320 to 350 (ETCSWEGHCKGATCSSNDDCSDELACISGIC). One copy of the R3-3 repeat lies at 357-387 (ETCEWEGHCEGASCSSHDDCDGNLACKNGKC).

It belongs to the glycosyl hydrolase 75 family.

The protein resides in the secreted. It carries out the reaction Endohydrolysis of beta-(1-&gt;4)-linkages between D-glucosamine residues in a partly acetylated chitosan.. Chitosanase catalyzing the endo-type cleavage of chitosan, the deacylated form of chitin. Chitosanase may be crucial in the degradation of the deacetylated portion of chitin in the fungal cell wall. Chitoolisaccharides produced by the hydrolysis of partially N-acetylated chitosan are known to have many biological activities, including antibacterial activity, immune-enhancing effects, and elicitor activity. In Aspergillus oryzae (strain ATCC 42149 / RIB 40) (Yellow koji mold), this protein is Endo-chitosanase C (csnC).